Here is a 1277-residue protein sequence, read N- to C-terminus: NPC intracellular cholesterol transporter 1 (1277 aa).

Positions 1-22 are cleaved as a signal peptide; the sequence is MSARGPAFGLLLLLLCPVQVFS. Residues 23–269 are Lumenal-facing; the sequence is QSCVWYGECG…WRILGLDAMY (247 aa). Disulfide bonds link Cys-25-Cys-74, Cys-31-Cys-42, Cys-63-Cys-109, Cys-75-Cys-113, Cys-97-Cys-238, Cys-100-Cys-160, Cys-177-Cys-184, Cys-227-Cys-243, and Cys-240-Cys-247. Asn-41 lines the cholesterol pocket. A glycan (N-linked (GlcNAc...) asparagine) is linked at Asn-70. Position 79 (Gln-79) interacts with cholesterol. 2 N-linked (GlcNAc...) asparagine glycosylation sites follow: Asn-122 and Asn-135. Residues 175–205 form an important for cholesterol binding and cholesterol transfer from NPC1 to liposomes region; sequence LLCGREAQACNATNWIEYMFNKDNGQAPFTI. 2 N-linked (GlcNAc...) asparagine glycosylation sites follow: Asn-185 and Asn-222. Residues 270 to 290 traverse the membrane as a helical segment; that stretch reads VIMWSSYMAFLIVFFGAFFAV. At 291–350 the chain is on the cytoplasmic side; the sequence is WCYRKRYFVSEYTPIDGNIAFSVNSSDKGQAFCCDPLGAAFERGLRRLFAQWGAFCVRHP. The helical transmembrane segment at 351–371 threads the bilayer; the sequence is GCVVFFSLAFIVACSSGLVFI. Topologically, residues 372-621 are lumenal; sequence RVTTDPVDLW…ELNRESNSDL (250 aa). Residues Asn-415, Asn-452, Asn-459, and Asn-478 are each glycosylated (N-linked (GlcNAc...) asparagine). Cystine bridges form between Cys-468/Cys-479 and Cys-516/Cys-533. The region spanning 620–785 is the SSD domain; it reads DLFTILISYA…ITCFVSLLGL (166 aa). Residues 622–642 form a helical membrane-spanning segment; it reads FTILISYAIMFLYISIALGHI. Residues 643-653 are Cytoplasmic-facing; that stretch reads KSCSRLLVDSK. A helical transmembrane segment spans residues 654–674; that stretch reads ISLGIAGILIVLSSVACSLGI. Residues 675–677 are Lumenal-facing; sequence FSY. The chain crosses the membrane as a helical span at residues 678 to 698; the sequence is IGVPLTLIVIEVIPFLVLAVG. Topologically, residues 699–734 are cytoplasmic; that stretch reads VDNIFILVQTYQRDERLQGETLDQQLGRVLGEVAPS. Residues 735 to 755 traverse the membrane as a helical segment; that stretch reads MFLSSFSETVAFFLGGLSVVP. At 756-759 the chain is on the lumenal side; sequence AVHT. A helical transmembrane segment spans residues 760–780; sequence FSLFAGMAVLIDFLLQITCFV. The Cytoplasmic segment spans residues 781 to 832; it reads SLLGLDIKRQEKNRLDVVCCVQGAEDGAGVQASESCLFRFFKNSYAPLLLKD. Residues 833–853 traverse the membrane as a helical segment; the sequence is WMRPIVIAVFVGVLSFSIAVL. At 854–1097 the chain is on the lumenal side; that stretch reads NKVEIGLDQS…EQYLTVIDDT (244 aa). The N-linked (GlcNAc...) asparagine glycan is linked to Asn-898. Cys-909 and Cys-914 are oxidised to a cystine. N-linked (GlcNAc...) asparagine glycans are attached at residues Asn-916, Asn-931, Asn-961, Asn-968, Asn-1028, and Asn-1063. 3 cysteine pairs are disulfide-bonded: Cys-956–Cys-1011, Cys-957–Cys-979, and Cys-967–Cys-976. Residues 1098–1118 traverse the membrane as a helical segment; it reads IFNLGVSLGAIFLVTVVLMGC. Topologically, residues 1119–1123 are cytoplasmic; the sequence is ELWAT. Residues 1124-1144 traverse the membrane as a helical segment; it reads VIMCVTIAMILVNMFGVMWLW. Gly-1145 is a topological domain (lumenal). A helical membrane pass occupies residues 1146 to 1166; sequence ISLNAVSLVNLVMSCGISVEF. At 1167 to 1194 the chain is on the cytoplasmic side; it reads CSHITRAFTLSTKGSRVDRAEEALAHMG. A helical membrane pass occupies residues 1195 to 1215; sequence SSVFSGITLTKFGGIVVLAFA. The Lumenal segment spans residues 1216–1226; it reads KSQIFQIFYFR. Residues 1227 to 1247 form a helical membrane-spanning segment; it reads MYLAIVLLGATHGLIFLPVLL. At 1248 to 1277 the chain is on the cytoplasmic side; sequence SYIGPSINKAKSLATQERYKGTEREQLLNF. The required for location in lysosomes stretch occupies residues 1274–1277; the sequence is LLNF. The short motif at 1274 to 1277 is the Di-leucine motif element; it reads LLNF.

The protein belongs to the patched family. In terms of assembly, interacts (via the second lumenal domain) with NPC2. Interacts with TMEM97; the interaction may decrease NPC1 availability to the cell. Interacts with TIM1. Interacts with SLC38A9; this interaction inhibits cholesterol-mediated mTORC1 activation via its sterol transport activity. N-glycosylated. Detected in corpus luteum, granulosa cells and adrenal gland.

Its subcellular location is the late endosome membrane. It localises to the lysosome membrane. It catalyses the reaction cholesterol(in) = cholesterol(out). Its function is as follows. Intracellular cholesterol transporter which acts in concert with NPC2 and plays an important role in the egress of cholesterol from the endosomal/lysosomal compartment. Unesterified cholesterol that has been released from LDLs in the lumen of the late endosomes/lysosomes is transferred by NPC2 to the cholesterol-binding pocket in the N-terminal domain of NPC1. Cholesterol binds to NPC1 with the hydroxyl group buried in the binding pocket. Binds oxysterol with higher affinity than cholesterol. May play a role in vesicular trafficking in glia, a process that may be crucial for maintaining the structural and functional integrity of nerve terminals. Inhibits cholesterol-mediated mTORC1 activation throught its interaction with SLC38A9. The protein is NPC intracellular cholesterol transporter 1 of Sus scrofa (Pig).